Consider the following 599-residue polypeptide: Pentatricopeptide repeat-containing protein At3g62470, mitochondrial (599 aa).

The transit peptide at 1–99 (MAAAPWLHLS…RGFSSGSSNV (99 aa)) directs the protein to the mitochondrion. PPR repeat units follow at residues 194–228 (DSRT…GLLT), 230–262 (ETFT…KFKI), 263–293 (GVET…LKER), 297–331 (NMMT…GLKP), 332–366 (DIVA…GPCP), 367–401 (NVRS…GLQP), 402–436 (DAAV…GHPP), 437–471 (DGKT…EIEP), 472–506 (SIHT…GICP), and 507–541 (DDNS…GMKT).

It belongs to the PPR family. P subfamily.

The protein localises to the mitochondrion. This chain is Pentatricopeptide repeat-containing protein At3g62470, mitochondrial, found in Arabidopsis thaliana (Mouse-ear cress).